Consider the following 618-residue polypeptide: Matrix metalloproteinase-24 (618 aa).

The first 41 residues, M1–G41, serve as a signal peptide directing secretion. The propeptide occupies A42–R128. Residues A42–A575 lie on the Extracellular side of the membrane. A Cysteine switch motif is present at residues P110–H117. Zn(2+)-binding residues include C112 and H255. The active site involves E256. Residues H259 and H265 each coordinate Zn(2+). A disordered region spans residues Q296 to I352. Over residues P302 to T314 the composition is skewed to pro residues. Residues S322 to P332 are compositionally biased toward basic and acidic residues. 4 Hemopexin repeats span residues P350 to L398, P399 to L444, R446 to P494, and Q495 to C542. A disulfide bond links C353 and C542. A helical membrane pass occupies residues V576–F596. Residues Q597 to V618 lie on the Cytoplasmic side of the membrane. The short motif at E616–V618 is the PDZ-binding element.

Belongs to the peptidase M10A family. Interacts (via PDZ-binding motif) with APBA3 (via PDZ domain). Interacts with GRIP1 and GRIP2. Requires Zn(2+) as cofactor. The cofactor is Ca(2+). In terms of processing, cleaved by a furin endopeptidase in the trans-Golgi network. As to expression, predominantly expressed in the nervous system: while enriched in the central nervous system, expression is also detected in the peripheral nervous system, including the trigeminal ganglion. Expression is not restricted to the nervous system: it is also enriched in the thymus, with a lower level of expression present in the aorta. In brain, high expression is present in the brain parenchyma, particularly within the neocortex.

Its subcellular location is the cell membrane. It is found in the golgi apparatus. The protein localises to the trans-Golgi network membrane. The protein resides in the secreted. It localises to the extracellular space. Its subcellular location is the extracellular matrix. Functionally, metalloprotease that mediates cleavage of N-cadherin (CDH2) and acts as a regulator of neuro-immune interactions and neural stem cell quiescence. Involved in cell-cell interactions between nociceptive neurites and mast cells, possibly by mediating cleavage of CDH2, thereby acting as a mediator of peripheral thermal nociception and inflammatory hyperalgesia. Key regulator of neural stem cells quiescence by mediating cleavage of CDH2, affecting CDH2-mediated anchorage of neural stem cells to ependymocytes in the adult subependymal zone, leading to modulate their quiescence. May play a role in axonal growth. Able to activate progelatinase A. May also be a proteoglycanase involved in degradation of proteoglycans, such as dermatan sulfate and chondroitin sulfate proteoglycans. Cleaves partially fibronectin, but not collagen type I, nor laminin. This chain is Matrix metalloproteinase-24 (Mmp24), found in Rattus norvegicus (Rat).